A 691-amino-acid chain; its full sequence is Elongation factor G (691 aa).

A tr-type G domain is found at 8–282; sequence ERVRNIGIAA…AVVDYLPAPI (275 aa). Residues 17 to 24, 81 to 85, and 135 to 138 each bind GTP; these read AHIDAGKT, DTPGH, and NKMD.

It belongs to the TRAFAC class translation factor GTPase superfamily. Classic translation factor GTPase family. EF-G/EF-2 subfamily.

Its subcellular location is the cytoplasm. Functionally, catalyzes the GTP-dependent ribosomal translocation step during translation elongation. During this step, the ribosome changes from the pre-translocational (PRE) to the post-translocational (POST) state as the newly formed A-site-bound peptidyl-tRNA and P-site-bound deacylated tRNA move to the P and E sites, respectively. Catalyzes the coordinated movement of the two tRNA molecules, the mRNA and conformational changes in the ribosome. The chain is Elongation factor G from Thermosynechococcus vestitus (strain NIES-2133 / IAM M-273 / BP-1).